Here is a 302-residue protein sequence, read N- to C-terminus: Oxygen-dependent coproporphyrinogen-III oxidase (302 aa).

Ser94 lines the substrate pocket. His98 and His108 together coordinate a divalent metal cation. His108 serves as the catalytic Proton donor. 110–112 (NVR) is a binding site for substrate. A divalent metal cation contacts are provided by His147 and His177. The tract at residues 242–277 (YVEFNLVYDRGTLFGLQTGGRTESILMSMPPLVRWQ) is important for dimerization. 260 to 262 (GGR) lines the substrate pocket.

Belongs to the aerobic coproporphyrinogen-III oxidase family. As to quaternary structure, homodimer. It depends on a divalent metal cation as a cofactor.

Its subcellular location is the cytoplasm. The catalysed reaction is coproporphyrinogen III + O2 + 2 H(+) = protoporphyrinogen IX + 2 CO2 + 2 H2O. The protein operates within porphyrin-containing compound metabolism; protoporphyrin-IX biosynthesis; protoporphyrinogen-IX from coproporphyrinogen-III (O2 route): step 1/1. Its function is as follows. Involved in the heme biosynthesis. Catalyzes the aerobic oxidative decarboxylation of propionate groups of rings A and B of coproporphyrinogen-III to yield the vinyl groups in protoporphyrinogen-IX. The protein is Oxygen-dependent coproporphyrinogen-III oxidase of Shewanella oneidensis (strain ATCC 700550 / JCM 31522 / CIP 106686 / LMG 19005 / NCIMB 14063 / MR-1).